Consider the following 208-residue polypeptide: Ribosome maturation factor RimM (208 aa).

The PRC barrel domain maps to 98-205 (ADEFYVPDLI…IIEITPPDGL (108 aa)). The disordered stretch occupies residues 154-174 (LPSKSKRSRDTKNQKKNQSPP).

Belongs to the RimM family. In terms of assembly, binds ribosomal protein uS19.

It localises to the cytoplasm. An accessory protein needed during the final step in the assembly of 30S ribosomal subunit, possibly for assembly of the head region. Essential for efficient processing of 16S rRNA. May be needed both before and after RbfA during the maturation of 16S rRNA. It has affinity for free ribosomal 30S subunits but not for 70S ribosomes. This is Ribosome maturation factor RimM from Trichodesmium erythraeum (strain IMS101).